Here is a 282-residue protein sequence, read N- to C-terminus: Biotin synthase (282 aa).

In terms of domain architecture, Radical SAM core spans 1–228 (MQEIFLCSIS…NARLMVAGGR (228 aa)). [4Fe-4S] cluster is bound by residues Cys17, Cys21, and Cys24. The [2Fe-2S] cluster site is built by Cys61, Cys96, Cys154, and Arg221.

The protein belongs to the radical SAM superfamily. Biotin synthase family. Homodimer. It depends on [4Fe-4S] cluster as a cofactor. Requires [2Fe-2S] cluster as cofactor.

It catalyses the reaction (4R,5S)-dethiobiotin + (sulfur carrier)-SH + 2 reduced [2Fe-2S]-[ferredoxin] + 2 S-adenosyl-L-methionine = (sulfur carrier)-H + biotin + 2 5'-deoxyadenosine + 2 L-methionine + 2 oxidized [2Fe-2S]-[ferredoxin]. The protein operates within cofactor biosynthesis; biotin biosynthesis; biotin from 7,8-diaminononanoate: step 2/2. Its function is as follows. Catalyzes the conversion of dethiobiotin (DTB) to biotin by the insertion of a sulfur atom into dethiobiotin via a radical-based mechanism. This is Biotin synthase from Helicobacter pylori (strain J99 / ATCC 700824) (Campylobacter pylori J99).